The sequence spans 125 residues: UPF0102 protein PA4424 (125 aa).

The protein belongs to the UPF0102 family.

The chain is UPF0102 protein PA4424 from Pseudomonas aeruginosa (strain ATCC 15692 / DSM 22644 / CIP 104116 / JCM 14847 / LMG 12228 / 1C / PRS 101 / PAO1).